Here is a 365-residue protein sequence, read N- to C-terminus: MIKFLSALILLLVITAAQAERIRDLTSVQGVRQNSLIGYGLVVGLDGTGDQTTQTPFTTQTLNNMLSQLGITVPTGTNMQLKNVAAVMVTASLPPFGRQGQTIDVVVSSMGNAKSLRGGTLLMTPLKGVDSQVYALAQGNILVGGAGASAGGSSVQVNQLNGGRITNGAVIERELPSQFGVGNTLNLQLNDEDFSMAQQIADTINRVRGYGSATALDARTIQVRVPSGNSSQVRFLADIQNMQVNVTPQDAKVVINSRTGSVVMNREVTLDSCAVAQGNLSVTVNRQANVSQPDTPFGGGQTVVTPQTQIDLRQSGGSLQSVRSSASLNNVVRALNALGATPMDLMSILQSMQSAGCLRAKLEII.

Positions 1–19 (MIKFLSALILLLVITAAQA) are cleaved as a signal peptide.

The protein belongs to the FlgI family. The basal body constitutes a major portion of the flagellar organelle and consists of four rings (L,P,S, and M) mounted on a central rod.

The protein resides in the periplasm. Its subcellular location is the bacterial flagellum basal body. Its function is as follows. Assembles around the rod to form the L-ring and probably protects the motor/basal body from shearing forces during rotation. This Escherichia coli O81 (strain ED1a) protein is Flagellar P-ring protein.